The chain runs to 246 residues: Thaumatin-like protein 1 (246 aa).

Residues 1–24 (MMKSQAALLGLTTLAILFFSGAHA) form the signal peptide. 8 disulfide bridges follow: cysteine 33/cysteine 245, cysteine 81/cysteine 91, cysteine 96/cysteine 103, cysteine 151/cysteine 234, cysteine 156/cysteine 217, cysteine 164/cysteine 180, cysteine 184/cysteine 193, and cysteine 194/cysteine 204.

It belongs to the thaumatin family. Equally expressed in the abscission zone and surrounding tissues of both fruitlets and leaves.

The protein localises to the secreted. May be involved in protecting plant tissues from pathogen infection. The chain is Thaumatin-like protein 1 from Prunus persica (Peach).